Reading from the N-terminus, the 59-residue chain is Chromatin protein Cren7 (59 aa).

It belongs to the Cren7 family. As to quaternary structure, monomer. In terms of processing, methylated at multiple sites, to varying extents.

The protein resides in the chromosome. The protein localises to the cytoplasm. Functionally, a chromatin protein, binds double-stranded DNA without sequence specificity. Constrains negative DNA supercoils. This Pyrobaculum arsenaticum (strain DSM 13514 / JCM 11321 / PZ6) protein is Chromatin protein Cren7.